The sequence spans 432 residues: Serine hydroxymethyltransferase 1 (432 aa).

(6S)-5,6,7,8-tetrahydrofolate contacts are provided by residues L131 and 135 to 137 (GHL). K240 is modified (N6-(pyridoxal phosphate)lysine).

It belongs to the SHMT family. Homodimer. Requires pyridoxal 5'-phosphate as cofactor.

It localises to the cytoplasm. It catalyses the reaction (6R)-5,10-methylene-5,6,7,8-tetrahydrofolate + glycine + H2O = (6S)-5,6,7,8-tetrahydrofolate + L-serine. It functions in the pathway one-carbon metabolism; tetrahydrofolate interconversion. It participates in amino-acid biosynthesis; glycine biosynthesis; glycine from L-serine: step 1/1. In terms of biological role, catalyzes the reversible interconversion of serine and glycine with tetrahydrofolate (THF) serving as the one-carbon carrier. This reaction serves as the major source of one-carbon groups required for the biosynthesis of purines, thymidylate, methionine, and other important biomolecules. Also exhibits THF-independent aldolase activity toward beta-hydroxyamino acids, producing glycine and aldehydes, via a retro-aldol mechanism. In Rhodopseudomonas palustris (strain ATCC BAA-98 / CGA009), this protein is Serine hydroxymethyltransferase 1.